The primary structure comprises 131 residues: Profilin (131 aa).

It belongs to the profilin family. In terms of assembly, occurs in many kinds of cells as a complex with monomeric actin in a 1:1 ratio.

Its subcellular location is the cytoplasm. The protein resides in the cytoskeleton. Its function is as follows. Binds to actin and affects the structure of the cytoskeleton. At high concentrations, profilin prevents the polymerization of actin, whereas it enhances it at low concentrations. By binding to PIP2, it inhibits the formation of IP3 and DG. The polypeptide is Profilin (Prunus persica (Peach)).